A 340-amino-acid polypeptide reads, in one-letter code: Dihydroorotate dehydrogenase (quinone) (340 aa).

FMN contacts are provided by residues 67–71 (AGFDK) and threonine 91. Substrate is bound at residue lysine 71. Substrate is bound at residue 116-120 (NRMGF). FMN contacts are provided by asparagine 143 and asparagine 176. Asparagine 176 provides a ligand contact to substrate. Serine 179 functions as the Nucleophile in the catalytic mechanism. Residue asparagine 181 coordinates substrate. FMN is bound by residues lysine 217 and threonine 245. Residue 246-247 (NT) participates in substrate binding. Residues glycine 267, glycine 296, and 317–318 (YT) each bind FMN.

It belongs to the dihydroorotate dehydrogenase family. Type 2 subfamily. Monomer. It depends on FMN as a cofactor.

It is found in the cell membrane. It carries out the reaction (S)-dihydroorotate + a quinone = orotate + a quinol. It functions in the pathway pyrimidine metabolism; UMP biosynthesis via de novo pathway; orotate from (S)-dihydroorotate (quinone route): step 1/1. Its function is as follows. Catalyzes the conversion of dihydroorotate to orotate with quinone as electron acceptor. The polypeptide is Dihydroorotate dehydrogenase (quinone) (Christiangramia forsetii (strain DSM 17595 / CGMCC 1.15422 / KT0803) (Gramella forsetii)).